We begin with the raw amino-acid sequence, 240 residues long: Probable transcriptional regulatory protein jhp_0149 (240 aa).

The protein belongs to the TACO1 family.

It is found in the cytoplasm. The protein is Probable transcriptional regulatory protein jhp_0149 of Helicobacter pylori (strain J99 / ATCC 700824) (Campylobacter pylori J99).